Reading from the N-terminus, the 741-residue chain is Catalase-peroxidase (741 aa).

An N-terminal signal peptide occupies residues methionine 1–alanine 23. Positions tryptophan 102 to tyrosine 223 form a cross-link, tryptophyl-tyrosyl-methioninium (Trp-Tyr) (with M-249). Histidine 103 acts as the Proton acceptor in catalysis. A cross-link (tryptophyl-tyrosyl-methioninium (Tyr-Met) (with W-102)) is located at residues tyrosine 223–methionine 249. Histidine 264 is a binding site for heme b.

The protein belongs to the peroxidase family. Peroxidase/catalase subfamily. As to quaternary structure, homodimer or homotetramer. The cofactor is heme b. Post-translationally, formation of the three residue Trp-Tyr-Met cross-link is important for the catalase, but not the peroxidase activity of the enzyme.

It carries out the reaction H2O2 + AH2 = A + 2 H2O. The enzyme catalyses 2 H2O2 = O2 + 2 H2O. Bifunctional enzyme with both catalase and broad-spectrum peroxidase activity. In Francisella tularensis subsp. holarctica (strain FTNF002-00 / FTA), this protein is Catalase-peroxidase.